The following is a 506-amino-acid chain: MSGIDFKQKISFQRPFSKPSSAEDEYEITRVFESDRGRIVNSAAIRRLQQKTQVFPLERNAAVRSRLTHSLEVQQVGRYIAKEILNRFKQDKKITAYGLDKLLDPFESIVEMACLMHDIGNPPFGHFGESAINDWFTKRMDPNGGSGSEPQSTDQCQVDVLKLCEGETELNILRSKIRHDLSQFEGNAQAIRLVHSLLKLNLTYAQVGCILKYTKPAYWSAPIPASHNYLMKKPGFYLAEENYVKELRRELNMEEFDRFPLTYIMEAADDISYCIADLEDAVEKNIFSVEQLYDHMSQEWGAVTPGDLFDKVVGAAFRQLGREQGRRSSEDQFFMYLRVNTVGKLVPHAAQRFIENLPAVFSGSFNQALLEDSSAACKLLQIFKRVAVKHVFNHPEVEQLELQGYRVISGLLDIYSPLLAMPETAFTQLVADDRHRKYPIETRLFHKLSIKHRLAYAESAERIRNLPSEQYEIYEYYYRARLIQDYISGMTDLYAYDEYRRLMAAE.

The HD domain maps to 66–274 (RLTHSLEVQQ…MEAADDISYC (209 aa)).

It belongs to the dGTPase family. Type 1 subfamily. As to quaternary structure, homotetramer. It depends on Mg(2+) as a cofactor.

It catalyses the reaction dGTP + H2O = 2'-deoxyguanosine + triphosphate + H(+). In terms of biological role, dGTPase preferentially hydrolyzes dGTP over the other canonical NTPs. The polypeptide is Deoxyguanosinetriphosphate triphosphohydrolase (Yersinia pestis bv. Antiqua (strain Antiqua)).